Reading from the N-terminus, the 68-residue chain is Ferredoxin Fdx (68 aa).

[3Fe-4S] cluster contacts are provided by C12, Q13, A16, C18, and C56.

[3Fe-4S] cluster is required as a cofactor.

Its function is as follows. Ferredoxin that is the redox partner of cytochrome CYP51, a sterol 14alpha-demethylase encoded by an adjacent gene. This Mycobacterium tuberculosis (strain ATCC 25618 / H37Rv) protein is Ferredoxin Fdx.